The chain runs to 158 residues: 2-C-methyl-D-erythritol 2,4-cyclodiphosphate synthase (158 aa).

The a divalent metal cation site is built by D9 and H11. Residues 9–11 (DVH) and 35–36 (HS) each bind 4-CDP-2-C-methyl-D-erythritol 2-phosphate. A divalent metal cation is bound at residue H43. 4-CDP-2-C-methyl-D-erythritol 2-phosphate-binding positions include 57 to 59 (DIG), 62 to 66 (FPDTD), 101 to 107 (AQKPKMA), 133 to 136 (TTTE), F140, and R143.

This sequence belongs to the IspF family. As to quaternary structure, homotrimer. Requires a divalent metal cation as cofactor.

The enzyme catalyses 4-CDP-2-C-methyl-D-erythritol 2-phosphate = 2-C-methyl-D-erythritol 2,4-cyclic diphosphate + CMP. It participates in isoprenoid biosynthesis; isopentenyl diphosphate biosynthesis via DXP pathway; isopentenyl diphosphate from 1-deoxy-D-xylulose 5-phosphate: step 4/6. Its function is as follows. Involved in the biosynthesis of isopentenyl diphosphate (IPP) and dimethylallyl diphosphate (DMAPP), two major building blocks of isoprenoid compounds. Catalyzes the conversion of 4-diphosphocytidyl-2-C-methyl-D-erythritol 2-phosphate (CDP-ME2P) to 2-C-methyl-D-erythritol 2,4-cyclodiphosphate (ME-CPP) with a corresponding release of cytidine 5-monophosphate (CMP). This chain is 2-C-methyl-D-erythritol 2,4-cyclodiphosphate synthase, found in Bacillus pumilus (strain SAFR-032).